The chain runs to 138 residues: MSNGRILHTMLRVGDLDKSIKFYTEVMGMQLLRTNENKEYEYTLAFVGYGDESQGAVIELTYNWGKTEYDLGTAFGHIAIGVDDIYATCDAIKAAGGNVTREAGPVKGGTTHIAFVKDPDGYMIELIQNKQASAGLEG.

The VOC domain occupies 5–129 (RILHTMLRVG…DGYMIELIQN (125 aa)). His-8 is a Ni(2+) binding site. Arg-12 is a substrate binding site. Ni(2+) is bound at residue Glu-59. The substrate site is built by Asn-63 and His-77. Residues His-77 and Glu-125 each coordinate Ni(2+). Glu-125 (proton donor/acceptor) is an active-site residue.

This sequence belongs to the glyoxalase I family. Requires Ni(2+) as cofactor.

It catalyses the reaction (R)-S-lactoylglutathione = methylglyoxal + glutathione. The protein operates within secondary metabolite metabolism; methylglyoxal degradation; (R)-lactate from methylglyoxal: step 1/2. Its function is as follows. Catalyzes the conversion of hemimercaptal, formed from methylglyoxal and glutathione, to S-lactoylglutathione. This Vibrio parahaemolyticus serotype O3:K6 (strain RIMD 2210633) protein is Probable lactoylglutathione lyase (gloA).